Here is a 442-residue protein sequence, read N- to C-terminus: Glutamate synthase large subunit-like protein (442 aa).

Positions 108–133 (LGRGATASGTSTTTGDGGMTDEERGH) are disordered. Residues 109-121 (GRGATASGTSTTT) are compositionally biased toward low complexity.

The protein belongs to the glutamate synthase family.

In Rhizobium meliloti (strain 1021) (Ensifer meliloti), this protein is Glutamate synthase large subunit-like protein (glxD).